A 562-amino-acid polypeptide reads, in one-letter code: DNA-binding protein MutS2 (562 aa).

380 to 387 is a binding site for ATP; the sequence is GANSGGKT.

The protein belongs to the DNA mismatch repair MutS family. Archaeal Muts2 subfamily. In terms of assembly, multimer. Requires Co(2+) as cofactor. Mn(2+) is required as a cofactor.

Has ATPase and non-specific DNA-binding activities. May be involved in recombination and/or recombinational repair. Not involved in mismatch repair. This chain is DNA-binding protein MutS2, found in Pyrococcus furiosus (strain ATCC 43587 / DSM 3638 / JCM 8422 / Vc1).